Reading from the N-terminus, the 343-residue chain is Protein RecA (343 aa).

Gly66–Thr73 serves as a coordination point for ATP.

It belongs to the RecA family.

Its subcellular location is the cytoplasm. In terms of biological role, can catalyze the hydrolysis of ATP in the presence of single-stranded DNA, the ATP-dependent uptake of single-stranded DNA by duplex DNA, and the ATP-dependent hybridization of homologous single-stranded DNAs. It interacts with LexA causing its activation and leading to its autocatalytic cleavage. This Rickettsia africae (strain ESF-5) protein is Protein RecA.